We begin with the raw amino-acid sequence, 363 residues long: Chorismate synthase (363 aa).

Arg-47 provides a ligand contact to NADP(+). Residues 124-126 (RSS), Gly-285, 300-304 (KPTAT), and Arg-326 contribute to the FMN site.

This sequence belongs to the chorismate synthase family. Homotetramer. Requires FMNH2 as cofactor.

The enzyme catalyses 5-O-(1-carboxyvinyl)-3-phosphoshikimate = chorismate + phosphate. It functions in the pathway metabolic intermediate biosynthesis; chorismate biosynthesis; chorismate from D-erythrose 4-phosphate and phosphoenolpyruvate: step 7/7. Functionally, catalyzes the anti-1,4-elimination of the C-3 phosphate and the C-6 proR hydrogen from 5-enolpyruvylshikimate-3-phosphate (EPSP) to yield chorismate, which is the branch point compound that serves as the starting substrate for the three terminal pathways of aromatic amino acid biosynthesis. This reaction introduces a second double bond into the aromatic ring system. This Opitutus terrae (strain DSM 11246 / JCM 15787 / PB90-1) protein is Chorismate synthase.